The following is a 938-amino-acid chain: Kinesin-like protein KIN-7B (938 aa).

Residues 29–348 (KILVTVRMRP…LSFAMSAKEV (320 aa)) form the Kinesin motor domain. Residue 113–120 (GQTSSGKT) participates in ATP binding. Positions 357-431 (VVSEKKLLKH…DLERKAKERK (75 aa)) form a coiled coil. The interval 450–481 (TKEESIPSKSVPSSRRTARDRRKDNVRQSLTS) is disordered. Positions 555-590 (KANLKEEINRLNSQEIAALEKKLECVQNTIDMLVSS) form a coiled coil. The segment at 628-678 (CSPLSGTENKDPESNVVSANSAPVSFGATPPKRDDNRCRTQSREGTPVSRQ) is disordered. Low complexity predominate over residues 641–652 (SNVVSANSAPVS). Residues 658–669 (PKRDDNRCRTQS) show a composition bias toward basic and acidic residues.

This sequence belongs to the TRAFAC class myosin-kinesin ATPase superfamily. Kinesin family. KIN-7 subfamily. As to quaternary structure, interacts with ANP3. Interacts with TIO/FU. Expressed in roots, stems, flowers, pollen mother cells and embryos.

The protein resides in the cytoplasm. It is found in the cytoskeleton. The protein localises to the phragmoplast. In terms of biological role, probable plus end-directed motor protein that functions in the NACK-PQR (ANP3-MKK6-MPK4) MAP kinase signaling pathway, which is essential for somatic cell cytokinesis, especially for the cell-plate formation and its expansion. May regulate the activity and the localization of ANP3, probably by association through the non-catalytic region of the kinase. Functionally redundant with NACK1 and essential to promote the progression of cytokinesis and for cellularization (formation of the cell plate) during microgametogenesis and megagametogenesis. The sequence is that of Kinesin-like protein KIN-7B from Arabidopsis thaliana (Mouse-ear cress).